Reading from the N-terminus, the 180-residue chain is UPF0227 protein Ent638_1623 (180 aa).

The protein belongs to the UPF0227 family.

This is UPF0227 protein Ent638_1623 from Enterobacter sp. (strain 638).